Reading from the N-terminus, the 598-residue chain is MRVSRLMLVTLRDVPADAEIASQQLLIRGGFIRRVGSGIYAYLPLMWRVLQRVMRIVREEMNQIGALETLLPQLQPAELWEKSGRWQGYTAGEGIMFHLEDRQERSLGLGPTHEEVITELASDLLRSYRQLPVTLYQIQSKFRDEIRPRFGLMRGREFIMKDAYSFHGDEGDLARMYEEMEKAYTRVFQRCGLTAVGVDADSGAIGGAASQEFMVTADAGEDLILISPDGDYAANQEKAVSIAPPALPLPSGESRVISTPGQVTIDELCSAQSLHPSQVVKVLLLLAKLESGDEQPVLVCLRGDQELNEVKLVNALTQQLDSPVLDLSPINADQVKTQGLQPLPLGSIGPDLSDHSLAGARSWKERFYKLADTTAAELERFVCGANTSNEHRWGASWSDLGTIPAMDLRNAKAGDHCVHRPEQSLEERRGIEVGHIFQLGRKYSLSMGAQITTKEGKQEHLWMGCYGIGISRLAQAAVEQHHDDAGIIWPLSIAPFQVIVVVANVQDEVQMALGEEIYNELLASGIDVLLDDRGERAGVKFKDADLIGIPWRVVVGRAAAEGNVELVKRSERDANVLSRAEAISSLLEAIPTELRIQL.

Belongs to the class-II aminoacyl-tRNA synthetase family. ProS type 1 subfamily. As to quaternary structure, homodimer.

The protein localises to the cytoplasm. It carries out the reaction tRNA(Pro) + L-proline + ATP = L-prolyl-tRNA(Pro) + AMP + diphosphate. Its function is as follows. Catalyzes the attachment of proline to tRNA(Pro) in a two-step reaction: proline is first activated by ATP to form Pro-AMP and then transferred to the acceptor end of tRNA(Pro). As ProRS can inadvertently accommodate and process non-cognate amino acids such as alanine and cysteine, to avoid such errors it has two additional distinct editing activities against alanine. One activity is designated as 'pretransfer' editing and involves the tRNA(Pro)-independent hydrolysis of activated Ala-AMP. The other activity is designated 'posttransfer' editing and involves deacylation of mischarged Ala-tRNA(Pro). The misacylated Cys-tRNA(Pro) is not edited by ProRS. The chain is Proline--tRNA ligase from Synechococcus sp. (strain CC9311).